The sequence spans 196 residues: Holliday junction branch migration complex subunit RuvA (196 aa).

Residues 1 to 62 are domain I; sequence MYEYINGLIT…ENEMTLYGFI (62 aa). The segment at 63–141 is domain II; the sequence is DENEKYLFNK…DLALSAGMTV (79 aa). A flexible linker region spans residues 142–146; the sequence is ETVPT. A domain III region spans residues 147–196; it reads TDNQALADALAALESLGYSAKDVAKLQTVLANQKDTTDGYIRSALKFLVK.

This sequence belongs to the RuvA family. In terms of assembly, homotetramer. Forms an RuvA(8)-RuvB(12)-Holliday junction (HJ) complex. HJ DNA is sandwiched between 2 RuvA tetramers; dsDNA enters through RuvA and exits via RuvB. An RuvB hexamer assembles on each DNA strand where it exits the tetramer. Each RuvB hexamer is contacted by two RuvA subunits (via domain III) on 2 adjacent RuvB subunits; this complex drives branch migration. In the full resolvosome a probable DNA-RuvA(4)-RuvB(12)-RuvC(2) complex forms which resolves the HJ.

It is found in the cytoplasm. Its function is as follows. The RuvA-RuvB-RuvC complex processes Holliday junction (HJ) DNA during genetic recombination and DNA repair, while the RuvA-RuvB complex plays an important role in the rescue of blocked DNA replication forks via replication fork reversal (RFR). RuvA specifically binds to HJ cruciform DNA, conferring on it an open structure. The RuvB hexamer acts as an ATP-dependent pump, pulling dsDNA into and through the RuvAB complex. HJ branch migration allows RuvC to scan DNA until it finds its consensus sequence, where it cleaves and resolves the cruciform DNA. This chain is Holliday junction branch migration complex subunit RuvA, found in Leuconostoc citreum (strain KM20).